Here is a 463-residue protein sequence, read N- to C-terminus: ATP-dependent protease ATPase subunit HslU (463 aa).

ATP is bound by residues V19, 61 to 66 (GVGKTE), D277, E341, and R413.

Belongs to the ClpX chaperone family. HslU subfamily. A double ring-shaped homohexamer of HslV is capped on each side by a ring-shaped HslU homohexamer. The assembly of the HslU/HslV complex is dependent on binding of ATP.

Its subcellular location is the cytoplasm. Its function is as follows. ATPase subunit of a proteasome-like degradation complex; this subunit has chaperone activity. The binding of ATP and its subsequent hydrolysis by HslU are essential for unfolding of protein substrates subsequently hydrolyzed by HslV. HslU recognizes the N-terminal part of its protein substrates and unfolds these before they are guided to HslV for hydrolysis. This is ATP-dependent protease ATPase subunit HslU from Shouchella clausii (strain KSM-K16) (Alkalihalobacillus clausii).